The following is a 339-amino-acid chain: Protein RETICULATA-RELATED 2, chloroplastic (339 aa).

Residues 1-58 (MAAMAAKLHISTKSDQSNVRLPRLINLSRDPTARVLFPRNGSVSSLHTNFSSPNIMVP) constitute a chloroplast transit peptide. The span at 68 to 86 (IGNHGGGSGSGGGGGGYGG) shows a compositional bias: gly residues. The segment at 68–92 (IGNHGGGSGSGGGGGGYGGSEEEES) is disordered. 2 helical membrane-spanning segments follow: residues 148–168 (FVFSTLVVGSILNFTLMYLLA) and 213–233 (VFATVGLAAGLVGTAISNGLI).

Belongs to the RETICULATA family.

It is found in the plastid. Its subcellular location is the chloroplast membrane. May play a role in leaf development. This chain is Protein RETICULATA-RELATED 2, chloroplastic, found in Arabidopsis thaliana (Mouse-ear cress).